A 350-amino-acid chain; its full sequence is Glycerol-1-phosphate dehydrogenase [NAD(P)+] (350 aa).

NAD(+) contacts are provided by residues 97-101 (GSIID) and 119-122 (TTAS). Aspartate 124 contacts substrate. Residue serine 128 participates in NAD(+) binding. Aspartate 171 serves as a coordination point for substrate. Positions 171 and 251 each coordinate Zn(2+). Residue histidine 255 coordinates substrate. Histidine 267 serves as a coordination point for Zn(2+).

Belongs to the glycerol-1-phosphate dehydrogenase family. Zn(2+) serves as cofactor.

Its subcellular location is the cytoplasm. It catalyses the reaction sn-glycerol 1-phosphate + NAD(+) = dihydroxyacetone phosphate + NADH + H(+). The enzyme catalyses sn-glycerol 1-phosphate + NADP(+) = dihydroxyacetone phosphate + NADPH + H(+). It participates in membrane lipid metabolism; glycerophospholipid metabolism. Catalyzes the NAD(P)H-dependent reduction of dihydroxyacetonephosphate (DHAP or glycerone phosphate) to glycerol 1-phosphate (G1P). The G1P thus generated is used as the glycerophosphate backbone of phospholipids in the cellular membranes of Archaea. In Thermococcus sibiricus (strain DSM 12597 / MM 739), this protein is Glycerol-1-phosphate dehydrogenase [NAD(P)+].